Consider the following 230-residue polypeptide: Thioredoxin domain-containing protein PLP3B (230 aa).

Positions 89–173 constitute a Thioredoxin domain; it reads VSEGDFLGEV…GIAMDRLVGF (85 aa). The interval 199–230 is disordered; the sequence is EKRKEEDEEDYEYQESIRRSVRSSANVDSDSD. Over residues 220–230 the composition is skewed to polar residues; it reads RSSANVDSDSD.

The protein belongs to the phosducin family. In terms of assembly, interacts with TUBB2, TUBB3, TUBB4 and TUBB5. Expressed in roots, cotyledons, leaves, stems and flowers.

The protein localises to the cytoplasm. The protein resides in the nucleus. Tubulin-binding protein involved in microtubule formation. This Arabidopsis thaliana (Mouse-ear cress) protein is Thioredoxin domain-containing protein PLP3B (PLP3B).